Here is a 541-residue protein sequence, read N- to C-terminus: Chaperonin GroEL (541 aa).

ATP-binding positions include 29-32 (TLGP), 86-90 (DGTTT), G413, 476-478 (NAA), and D492. Residues 521–541 (KPEENAPAAPAAPNPGMGGMM) are disordered. Over residues 525-535 (NAPAAPAAPNP) the composition is skewed to low complexity.

It belongs to the chaperonin (HSP60) family. As to quaternary structure, forms a cylinder of 14 subunits composed of two heptameric rings stacked back-to-back. Interacts with the co-chaperonin GroES.

Its subcellular location is the cytoplasm. The enzyme catalyses ATP + H2O + a folded polypeptide = ADP + phosphate + an unfolded polypeptide.. Functionally, together with its co-chaperonin GroES, plays an essential role in assisting protein folding. The GroEL-GroES system forms a nano-cage that allows encapsulation of the non-native substrate proteins and provides a physical environment optimized to promote and accelerate protein folding. This Lactiplantibacillus plantarum (strain ATCC BAA-793 / NCIMB 8826 / WCFS1) (Lactobacillus plantarum) protein is Chaperonin GroEL.